The primary structure comprises 347 residues: tRNA N6-adenosine threonylcarbamoyltransferase (347 aa).

Residues His111 and His115 each coordinate Fe cation. Substrate contacts are provided by residues 134–138 (LVSGG), Asp167, Gly180, and Asn277. Asp305 provides a ligand contact to Fe cation.

It belongs to the KAE1 / TsaD family. The cofactor is Fe(2+).

The protein resides in the cytoplasm. The enzyme catalyses L-threonylcarbamoyladenylate + adenosine(37) in tRNA = N(6)-L-threonylcarbamoyladenosine(37) in tRNA + AMP + H(+). Its function is as follows. Required for the formation of a threonylcarbamoyl group on adenosine at position 37 (t(6)A37) in tRNAs that read codons beginning with adenine. Is involved in the transfer of the threonylcarbamoyl moiety of threonylcarbamoyl-AMP (TC-AMP) to the N6 group of A37, together with TsaE and TsaB. TsaD likely plays a direct catalytic role in this reaction. The protein is tRNA N6-adenosine threonylcarbamoyltransferase of Ralstonia pickettii (strain 12J).